The chain runs to 93 residues: Small ribosomal subunit protein uS19 (93 aa).

The protein belongs to the universal ribosomal protein uS19 family.

Functionally, protein S19 forms a complex with S13 that binds strongly to the 16S ribosomal RNA. The chain is Small ribosomal subunit protein uS19 from Campylobacter hominis (strain ATCC BAA-381 / DSM 21671 / CCUG 45161 / LMG 19568 / NCTC 13146 / CH001A).